The chain runs to 441 residues: 3-phosphoshikimate 1-carboxyvinyltransferase (441 aa).

Positions 1–10 (MSVTSTASSS) are enriched in polar residues. The disordered stretch occupies residues 1-21 (MSVTSTASSSRELRAGGGLSG). 3-phosphoshikimate contacts are provided by Lys-29, Ser-30, and Arg-34. Lys-29 contributes to the phosphoenolpyruvate binding site. Gly-103 and Arg-132 together coordinate phosphoenolpyruvate. Residues Ser-177, Gln-179, Asp-328, and Lys-355 each coordinate 3-phosphoshikimate. A phosphoenolpyruvate-binding site is contributed by Gln-179. The Proton acceptor role is filled by Asp-328. 2 residues coordinate phosphoenolpyruvate: Arg-359 and Arg-401.

It belongs to the EPSP synthase family. Monomer.

It localises to the cytoplasm. The catalysed reaction is 3-phosphoshikimate + phosphoenolpyruvate = 5-O-(1-carboxyvinyl)-3-phosphoshikimate + phosphate. The protein operates within metabolic intermediate biosynthesis; chorismate biosynthesis; chorismate from D-erythrose 4-phosphate and phosphoenolpyruvate: step 6/7. In terms of biological role, catalyzes the transfer of the enolpyruvyl moiety of phosphoenolpyruvate (PEP) to the 5-hydroxyl of shikimate-3-phosphate (S3P) to produce enolpyruvyl shikimate-3-phosphate and inorganic phosphate. The polypeptide is 3-phosphoshikimate 1-carboxyvinyltransferase (Prochlorococcus marinus (strain MIT 9303)).